The sequence spans 90 residues: Probable Fe(2+)-trafficking protein (90 aa).

This sequence belongs to the Fe(2+)-trafficking protein family.

In terms of biological role, could be a mediator in iron transactions between iron acquisition and iron-requiring processes, such as synthesis and/or repair of Fe-S clusters in biosynthetic enzymes. The sequence is that of Probable Fe(2+)-trafficking protein from Haemophilus influenzae (strain PittEE).